The following is a 308-amino-acid chain: Large ribosomal subunit protein mL38 (308 aa).

A mitochondrion-targeting transit peptide spans 1–17 (MKRVWPRIPTISNVCRA).

It belongs to the phosphatidylethanolamine-binding protein family. Mitochondrion-specific ribosomal protein mL38 subfamily. As to quaternary structure, component of the mitochondrial large ribosomal subunit (mt-LSU). Mature yeast 74S mitochondrial ribosomes consist of a small (37S) and a large (54S) subunit. The 37S small subunit contains a 15S ribosomal RNA (15S mt-rRNA) and at least 32 different proteins. The 54S large subunit contains a 21S rRNA (21S mt-rRNA) and at least 45 different proteins.

The protein resides in the mitochondrion. Component of the mitochondrial ribosome (mitoribosome), a dedicated translation machinery responsible for the synthesis of mitochondrial genome-encoded proteins, including at least some of the essential transmembrane subunits of the mitochondrial respiratory chain. The mitoribosomes are attached to the mitochondrial inner membrane and translation products are cotranslationally integrated into the membrane. This Schizosaccharomyces pombe (strain 972 / ATCC 24843) (Fission yeast) protein is Large ribosomal subunit protein mL38 (mrpl35).